The primary structure comprises 204 residues: Large ribosomal subunit protein uL4 (204 aa).

Residues Val56–Ser79 form a disordered region.

This sequence belongs to the universal ribosomal protein uL4 family. Part of the 50S ribosomal subunit.

Its function is as follows. One of the primary rRNA binding proteins, this protein initially binds near the 5'-end of the 23S rRNA. It is important during the early stages of 50S assembly. It makes multiple contacts with different domains of the 23S rRNA in the assembled 50S subunit and ribosome. Forms part of the polypeptide exit tunnel. The polypeptide is Large ribosomal subunit protein uL4 (Wolbachia pipientis subsp. Culex pipiens (strain wPip)).